Reading from the N-terminus, the 28-residue chain is Alkaline serine protease NJP (28 aa).

Its activity is regulated as follows. Inhibited by PMSF. Not or very weakly inhibited by EDTA, EGTA, beta-mercaptoethanol, benzamidine, aprotinin, iodoacetic acid, pepstatin A and SBTI. Functionally, alkaline thrombin-like serine protease. Has fibrinolytic and fibrinogenolytic but not plasminogenolytic activity. Cleaves fibrinogen chains Aalpha, Bbeta and gamma chains in that order. Cleaves after Arg and Lys residues. The chain is Alkaline serine protease NJP from Hediste japonica (Polychaete worm).